A 644-amino-acid polypeptide reads, in one-letter code: Pesticidal crystal protein Cry3Aa (644 aa).

Positions Met1–Lys13 are enriched in basic and acidic residues. The segment at Met1–Val20 is disordered. A propeptide spans Met1–Leu57 (removed in mature form).

The protein belongs to the delta endotoxin family.

Its function is as follows. Promotes colloidosmotic lysis by binding to the midgut epithelial cells of Coleoptera. In Bacillus thuringiensis subsp. san diego, this protein is Pesticidal crystal protein Cry3Aa (cry3Aa).